We begin with the raw amino-acid sequence, 139 residues long: MAKKKRNPSAEEAGDGEQTAAELGDFETTLGDVETIVRKLESGALTLDDSLKQYEVAVAKMRQCYQLLDVAERKISVLAGVDAEGRPVTEPLENMSGGESLVQKQASRGKRRGAVAPDHSASDTTGVDSADLDSAEDDE.

2 disordered regions span residues 1-26 (MAKK…LGDF) and 82-139 (DAEG…EDDE). Residues 130 to 139 (ADLDSAEDDE) are compositionally biased toward acidic residues.

It belongs to the XseB family. In terms of assembly, heterooligomer composed of large and small subunits.

It localises to the cytoplasm. It carries out the reaction Exonucleolytic cleavage in either 5'- to 3'- or 3'- to 5'-direction to yield nucleoside 5'-phosphates.. Functionally, bidirectionally degrades single-stranded DNA into large acid-insoluble oligonucleotides, which are then degraded further into small acid-soluble oligonucleotides. The sequence is that of Exodeoxyribonuclease 7 small subunit from Rhodopirellula baltica (strain DSM 10527 / NCIMB 13988 / SH1).